Here is a 334-residue protein sequence, read N- to C-terminus: H-2 class I histocompatibility antigen, Q7 alpha chain (334 aa).

The first 21 residues, 1–21 (MALTMLLLLVAAALTLIETRA), serve as a signal peptide directing secretion. An alpha-1 region spans residues 22–111 (GQHSLQYFHT…AQSYYNQSKG (90 aa)). The Extracellular portion of the chain corresponds to 22-310 (GQHSLQYFHT…PPYTVSNMAT (289 aa)). Asn-107 carries N-linked (GlcNAc...) asparagine glycosylation. Residues 112–203 (GSHTLQWMYG…QLGKETLLRT (92 aa)) are alpha-2. 2 disulfide bridges follow: Cys-122–Cys-185 and Cys-224–Cys-280. Residues 204–295 (DPPKAHVTHH…GLPEPLTLRW (92 aa)) form an alpha-3 region. The Ig-like C1-type domain occupies 206–294 (PKAHVTHHPR…EGLPEPLTLR (89 aa)). Asn-277 carries N-linked (GlcNAc...) asparagine glycosylation. The segment at 296 to 310 (GRWEPPPYTVSNMAT) is connecting peptide. The chain crosses the membrane as a helical span at residues 311–332 (IAVVVDLGAVAIIGAVVAFVMN).

Belongs to the MHC class I family. Heterodimer of an alpha chain and a beta chain (beta-2-microglobulin).

It is found in the membrane. In terms of biological role, involved in the presentation of foreign antigens to the immune system. This chain is H-2 class I histocompatibility antigen, Q7 alpha chain (H2-Q7), found in Mus musculus (Mouse).